The primary structure comprises 314 residues: Small glutamine-rich tetratricopeptide repeat-containing protein alpha (314 aa).

The tract at residues alanine 65–asparagine 99 is disordered. The segment covering methionine 71–proline 83 has biased composition (basic and acidic residues). Residue threonine 81 is modified to Phosphothreonine. Phosphoserine is present on serine 84. Over residues glutamate 90–asparagine 99 the composition is skewed to basic and acidic residues. TPR repeat units lie at residues alanine 91 to asparagine 124, alanine 125 to tyrosine 158, and serine 159 to asparagine 192. An N6-acetyllysine modification is found at lysine 137. Positions glycine 249–serine 268 are disordered. The residue at position 302 (serine 302) is a Phosphoserine. Threonine 304 carries the post-translational modification Phosphothreonine. Residue serine 306 is modified to Phosphoserine.

The protein belongs to the SGT family. Homodimer. Homooligomer. Interacts with DNAJC5 and DNAJC5B. Interacts (via TPR repeats) with HSP90AA1. Interacts (via Gln-rich region) with SLC2A1. Interacts with HSP90AB1. Interacts (via TPR repeats) with HSPA8/Hsc70; the interaction is direct. Interacts with BAG6 (via ubiquitin-like domain); interaction prevents interaction between BAG6 and RNF126. Forms a multiprotein complex, at least composed of DNAJB12, DNAJB14, HSPA8/Hsc70 and SGTA; interaction with DNAJB14 and HSPA8/Hsc70 is direct. In terms of assembly, (Microbial infection) Interacts with NS1 from parvovirus H-1. Ubiquitously expressed.

It localises to the cytoplasm. It is found in the nucleus. Its function is as follows. Co-chaperone that binds misfolded and hydrophobic patches-containing client proteins in the cytosol. Mediates their targeting to the endoplasmic reticulum but also regulates their sorting to the proteasome when targeting fails. Functions in tail-anchored/type II transmembrane proteins membrane insertion constituting with ASNA1 and the BAG6 complex a targeting module. Functions upstream of the BAG6 complex and ASNA1, binding more rapidly the transmembrane domain of newly synthesized proteins. It is also involved in the regulation of the endoplasmic reticulum-associated misfolded protein catabolic process via its interaction with BAG6: collaborates with the BAG6 complex to maintain hydrophobic substrates in non-ubiquitinated states. Competes with RNF126 for interaction with BAG6, preventing the ubiquitination of client proteins associated with the BAG6 complex. Binds directly to HSC70 and HSP70 and regulates their ATPase activity. The chain is Small glutamine-rich tetratricopeptide repeat-containing protein alpha (Sgta) from Rattus norvegicus (Rat).